The following is a 127-amino-acid chain: Small ribosomal subunit protein uS12 (127 aa).

Asp-89 bears the 3-methylthioaspartic acid mark.

Belongs to the universal ribosomal protein uS12 family. As to quaternary structure, part of the 30S ribosomal subunit. Contacts proteins S8 and S17. May interact with IF1 in the 30S initiation complex.

With S4 and S5 plays an important role in translational accuracy. Functionally, interacts with and stabilizes bases of the 16S rRNA that are involved in tRNA selection in the A site and with the mRNA backbone. Located at the interface of the 30S and 50S subunits, it traverses the body of the 30S subunit contacting proteins on the other side and probably holding the rRNA structure together. The combined cluster of proteins S8, S12 and S17 appears to hold together the shoulder and platform of the 30S subunit. This Campylobacter fetus subsp. fetus (strain 82-40) protein is Small ribosomal subunit protein uS12.